The sequence spans 262 residues: Lipoate-protein ligase A subunit 1 (262 aa).

One can recognise a BPL/LPL catalytic domain in the interval 30-226 (YGDKPILRFY…GFSETLHIDF (197 aa)). Residues Arg72, Gly77, Tyr80, Asp85, Pro132, and Lys135 each contribute to the ATP site. Mg(2+) is bound by residues Thr137 and Asp138. Lys145, Ala149, and Ala163 together coordinate ATP. Lys145 contacts (R)-lipoate. Residue Ala149 coordinates Mg(2+).

It belongs to the LplA family. Heterodimer composed of LplA and LplB.

It is found in the cytoplasm. It catalyses the reaction L-lysyl-[lipoyl-carrier protein] + (R)-lipoate + ATP = N(6)-[(R)-lipoyl]-L-lysyl-[lipoyl-carrier protein] + AMP + diphosphate + H(+). Its pathway is protein modification; protein lipoylation via exogenous pathway; protein N(6)-(lipoyl)lysine from lipoate: step 1/2. The protein operates within protein modification; protein lipoylation via exogenous pathway; protein N(6)-(lipoyl)lysine from lipoate: step 2/2. Functionally, part of a lipoate-protein ligase complex that catalyzes both the ATP-dependent activation of exogenously supplied lipoate to lipoyl-AMP and the transfer of the activated lipoyl onto the lipoyl domains of lipoate-dependent enzymes. Can also use octanoate as substrate. The protein is Lipoate-protein ligase A subunit 1 (lplA) of Thermoplasma acidophilum (strain ATCC 25905 / DSM 1728 / JCM 9062 / NBRC 15155 / AMRC-C165).